The following is a 181-amino-acid chain: NADH-quinone oxidoreductase subunit I 2 (181 aa).

4Fe-4S ferredoxin-type domains are found at residues 44 to 74 (LNRY…VEGA) and 90 to 119 (RVYQ…MTND). [4Fe-4S] cluster-binding residues include cysteine 54, cysteine 57, cysteine 60, cysteine 64, cysteine 99, cysteine 102, cysteine 105, and cysteine 109.

Belongs to the complex I 23 kDa subunit family. As to quaternary structure, NDH-1 is composed of 14 different subunits. Subunits NuoA, H, J, K, L, M, N constitute the membrane sector of the complex. [4Fe-4S] cluster serves as cofactor.

Its subcellular location is the cell membrane. The enzyme catalyses a quinone + NADH + 5 H(+)(in) = a quinol + NAD(+) + 4 H(+)(out). Functionally, NDH-1 shuttles electrons from NADH, via FMN and iron-sulfur (Fe-S) centers, to quinones in the respiratory chain. The immediate electron acceptor for the enzyme in this species is believed to be menaquinone. Couples the redox reaction to proton translocation (for every two electrons transferred, four hydrogen ions are translocated across the cytoplasmic membrane), and thus conserves the redox energy in a proton gradient. This is NADH-quinone oxidoreductase subunit I 2 from Mycolicibacterium paratuberculosis (strain ATCC BAA-968 / K-10) (Mycobacterium paratuberculosis).